A 93-amino-acid polypeptide reads, in one-letter code: Small ribosomal subunit protein uS19 (93 aa).

This sequence belongs to the universal ribosomal protein uS19 family.

In terms of biological role, protein S19 forms a complex with S13 that binds strongly to the 16S ribosomal RNA. This is Small ribosomal subunit protein uS19 from Lacticaseibacillus paracasei (strain ATCC 334 / BCRC 17002 / CCUG 31169 / CIP 107868 / KCTC 3260 / NRRL B-441) (Lactobacillus paracasei).